Here is a 1355-residue protein sequence, read N- to C-terminus: Patatin-like phospholipase domain-containing protein 6 (1355 aa).

Residues 1-43 (MGTPSHELNTTSSGAEVIQKTLEEGLGRRICVAQPVPFVPQVL) lie on the Lumenal side of the membrane. The N-linked (GlcNAc...) asparagine glycan is linked to Asn-9. The chain crosses the membrane as a helical span at residues 44-64 (GVMIGAGVAVLVTAVLILLVV). The Cytoplasmic segment spans residues 65 to 1355 (RRLRVQKTPA…QETPSSVADA (1291 aa)). A nucleoside 3',5'-cyclic phosphate is bound at residue 179–306 (VLGHFEKPLF…VRVVQIIMVR (128 aa)). A Phosphoserine modification is found at Ser-338. The segment at 338 to 395 (SPGLPTRTSPVRGSKRVVSTSGTEDTSKETSGRPLDSIGAPLPGPAGDPVKPTSLEAP) is disordered. The span at 343–361 (TRTSPVRGSKRVVSTSGTE) shows a compositional bias: polar residues. Thr-345 carries the phosphothreonine modification. Ser-346, Ser-356, and Ser-405 each carry phosphoserine. A nucleoside 3',5'-cyclic phosphate-binding positions include 492 to 614 (ELAK…VAAR) and 610 to 730 (TVAA…LSQK). Residues 961 to 1127 (LVLGGGGARG…INNLPADIAR (167 aa)) form the PNPLA domain. A GXGXXG motif is present at residues 965–970 (GGGARG). The short motif at 992–996 (GTSIG) is the GXSXG element. The Nucleophile role is filled by Ser-994. Asp-1114 (proton acceptor) is an active-site residue. The DGA/G motif lies at 1114–1116 (DGG). Positions 1286–1355 (SYVSDGCADG…QETPSSVADA (70 aa)) are disordered. Positions 1293 to 1309 (ADGEESDCLTEYEEDAG) are enriched in acidic residues.

This sequence belongs to the NTE family. Glycosylated. Expressed in brain, testes and kidney (at protein level). Expressed ubiquitously in brain of young mice. Reaching adulthood, there is a most prominent expression in Purkinje cells, granule cells and pyramidal neurons of the hippocampus and some large neurons in the medulla oblongata, nucleus dentatus and pons.

It is found in the endoplasmic reticulum membrane. It carries out the reaction a 1-acyl-sn-glycero-3-phosphocholine + H2O = sn-glycerol 3-phosphocholine + a fatty acid + H(+). The catalysed reaction is 1-hexadecanoyl-sn-glycero-3-phosphocholine + H2O = sn-glycerol 3-phosphocholine + hexadecanoate + H(+). The enzyme catalyses 1-hexadecanoyl-sn-glycero-3-phosphate + H2O = sn-glycerol 3-phosphate + hexadecanoate + H(+). It catalyses the reaction 1-(9Z-octadecenoyl)-sn-glycero-3-phosphocholine + H2O = sn-glycerol 3-phosphocholine + (9Z)-octadecenoate + H(+). It carries out the reaction 1-hexadecanoylglycerol + H2O = glycerol + hexadecanoate + H(+). The catalysed reaction is 2-hexadecanoylglycerol + H2O = glycerol + hexadecanoate + H(+). The enzyme catalyses 1-(9Z-octadecenoyl)-glycerol + H2O = glycerol + (9Z)-octadecenoate + H(+). It catalyses the reaction 2-(9Z-octadecenoyl)-glycerol + H2O = glycerol + (9Z)-octadecenoate + H(+). It carries out the reaction 2-(5Z,8Z,11Z,14Z-eicosatetraenoyl)-glycerol + H2O = glycerol + (5Z,8Z,11Z,14Z)-eicosatetraenoate + H(+). With respect to regulation, inhibited by a series a OPs such as mipafox (MPX), phenyl saligenin phosphate (PSP), phenyl dipentyl phosphinate (PDPP), diisopropyl fluorophosphate and paraoxon. In terms of biological role, phospholipase B that deacylates intracellular phosphatidylcholine (PtdCho), generating glycerophosphocholine (GroPtdCho). This deacylation occurs at both sn-2 and sn-1 positions of PtdCho. Catalyzes the hydrolysis of several naturally occurring membrane-associated lipids. Hydrolyzes lysophospholipids and monoacylglycerols, preferring the 1-acyl to the 2-acyl isomer. Does not catalyze hydrolysis of di- or triacylglycerols or fatty acid amides. This chain is Patatin-like phospholipase domain-containing protein 6 (Pnpla6), found in Mus musculus (Mouse).